Here is a 265-residue protein sequence, read N- to C-terminus: UPF0354 protein GWCH70_2742 (265 aa).

Belongs to the UPF0354 family.

The chain is UPF0354 protein GWCH70_2742 from Geobacillus sp. (strain WCH70).